The following is a 210-amino-acid chain: N-(5'-phosphoribosyl)anthranilate isomerase (210 aa).

It belongs to the TrpF family.

The enzyme catalyses N-(5-phospho-beta-D-ribosyl)anthranilate = 1-(2-carboxyphenylamino)-1-deoxy-D-ribulose 5-phosphate. The protein operates within amino-acid biosynthesis; L-tryptophan biosynthesis; L-tryptophan from chorismate: step 3/5. The sequence is that of N-(5'-phosphoribosyl)anthranilate isomerase from Staphylococcus aureus (strain MRSA252).